A 428-amino-acid polypeptide reads, in one-letter code: GTPase Obg (428 aa).

The Obg domain occupies 1–158 (MFVDQTKIDV…RTLRLELKVL (158 aa)). Residues 159-328 (ADVGLVGFPS…LMGKTADLVE (170 aa)) enclose the OBG-type G domain. Residues 165–172 (GFPSVGKS), 190–194 (FTTLT), 212–215 (DLPG), 282–285 (TQMD), and 309–311 (SSV) contribute to the GTP site. Mg(2+)-binding residues include S172 and T192. Residues 350–428 (YKKPEDEGFK…IADFTFEFVD (79 aa)) form the OCT domain.

It belongs to the TRAFAC class OBG-HflX-like GTPase superfamily. OBG GTPase family. Monomer. The cofactor is Mg(2+).

It localises to the cytoplasm. Its function is as follows. An essential GTPase which binds GTP, GDP and possibly (p)ppGpp with moderate affinity, with high nucleotide exchange rates and a fairly low GTP hydrolysis rate. Plays a role in control of the cell cycle, stress response, ribosome biogenesis and in those bacteria that undergo differentiation, in morphogenesis control. The chain is GTPase Obg from Lactobacillus johnsonii (strain CNCM I-12250 / La1 / NCC 533).